Here is a 275-residue protein sequence, read N- to C-terminus: 3-methyl-2-oxobutanoate hydroxymethyltransferase (275 aa).

Asp-44 and Asp-83 together coordinate Mg(2+). Residues 44-45 (DS), Asp-83, and Lys-113 each bind 3-methyl-2-oxobutanoate. Glu-115 serves as a coordination point for Mg(2+). Catalysis depends on Glu-182, which acts as the Proton acceptor.

The protein belongs to the PanB family. Homodecamer; pentamer of dimers. It depends on Mg(2+) as a cofactor.

It is found in the cytoplasm. The enzyme catalyses 3-methyl-2-oxobutanoate + (6R)-5,10-methylene-5,6,7,8-tetrahydrofolate + H2O = 2-dehydropantoate + (6S)-5,6,7,8-tetrahydrofolate. It participates in cofactor biosynthesis; (R)-pantothenate biosynthesis; (R)-pantoate from 3-methyl-2-oxobutanoate: step 1/2. In terms of biological role, catalyzes the reversible reaction in which hydroxymethyl group from 5,10-methylenetetrahydrofolate is transferred onto alpha-ketoisovalerate to form ketopantoate. The sequence is that of 3-methyl-2-oxobutanoate hydroxymethyltransferase from Clostridioides difficile (strain 630) (Peptoclostridium difficile).